The chain runs to 498 residues: ATP synthase subunit beta, chloroplastic (498 aa).

ATP is bound at residue Gly-172–Thr-179.

This sequence belongs to the ATPase alpha/beta chains family. In terms of assembly, F-type ATPases have 2 components, CF(1) - the catalytic core - and CF(0) - the membrane proton channel. CF(1) has five subunits: alpha(3), beta(3), gamma(1), delta(1), epsilon(1). CF(0) has four main subunits: a(1), b(1), b'(1) and c(9-12).

The protein resides in the plastid. It is found in the chloroplast thylakoid membrane. It catalyses the reaction ATP + H2O + 4 H(+)(in) = ADP + phosphate + 5 H(+)(out). Its function is as follows. Produces ATP from ADP in the presence of a proton gradient across the membrane. The catalytic sites are hosted primarily by the beta subunits. The sequence is that of ATP synthase subunit beta, chloroplastic from Zea mays (Maize).